The chain runs to 464 residues: Soluble pyridine nucleotide transhydrogenase (464 aa).

35–44 provides a ligand contact to FAD; it reads DSRRQVGGNC.

The protein belongs to the class-I pyridine nucleotide-disulfide oxidoreductase family. FAD serves as cofactor.

It is found in the cytoplasm. The catalysed reaction is NAD(+) + NADPH = NADH + NADP(+). Conversion of NADPH, generated by peripheral catabolic pathways, to NADH, which can enter the respiratory chain for energy generation. This Pseudomonas fluorescens (strain ATCC BAA-477 / NRRL B-23932 / Pf-5) protein is Soluble pyridine nucleotide transhydrogenase.